The primary structure comprises 328 residues: tRNA uridine(34) hydroxylase (328 aa).

The region spanning 130 to 224 is the Rhodanese domain; that stretch reads LDKDTVVLDT…YGKDPEVQGE (95 aa). Cysteine 184 serves as the catalytic Cysteine persulfide intermediate.

The protein belongs to the TrhO family.

The catalysed reaction is uridine(34) in tRNA + AH2 + O2 = 5-hydroxyuridine(34) in tRNA + A + H2O. Its function is as follows. Catalyzes oxygen-dependent 5-hydroxyuridine (ho5U) modification at position 34 in tRNAs. This is tRNA uridine(34) hydroxylase from Streptococcus pneumoniae (strain Hungary19A-6).